The chain runs to 158 residues: UPF0262 protein RHOS4_22360 (158 aa).

It belongs to the UPF0262 family.

This chain is UPF0262 protein RHOS4_22360, found in Cereibacter sphaeroides (strain ATCC 17023 / DSM 158 / JCM 6121 / CCUG 31486 / LMG 2827 / NBRC 12203 / NCIMB 8253 / ATH 2.4.1.) (Rhodobacter sphaeroides).